We begin with the raw amino-acid sequence, 245 residues long: Eukaryotic translation initiation factor 6 (245 aa).

Y113 carries the phosphotyrosine modification. T165 is modified (phosphothreonine). At S166 the chain carries Phosphoserine. Phosphoserine; by CK1 is present on residues S174 and S175. The residue at position 235 (S235) is a Phosphoserine; by PKC. 2 positions are modified to phosphoserine: S239 and S243.

This sequence belongs to the eIF-6 family. Monomer. Associates with the 60S ribosomal subunit. Interacts with RACK1. Interacts with DICER1, AGO2, TARBP2, MOV10 and RPL7A; they form a large RNA-induced silencing complex (RISC). Post-translationally, phosphorylation at Ser-174 and Ser-175 by CSNK1D/CK1 promotes nuclear export. Ufmylated by UFL1.

It localises to the cytoplasm. The protein localises to the nucleus. Its subcellular location is the nucleolus. Its function is as follows. Binds to the 60S ribosomal subunit and prevents its association with the 40S ribosomal subunit to form the 80S initiation complex in the cytoplasm. Behaves as a stimulatory translation initiation factor downstream insulin/growth factors. Is also involved in ribosome biogenesis. Associates with pre-60S subunits in the nucleus and is involved in its nuclear export. Cytoplasmic release of TIF6 from 60S subunits and nuclear relocalization is promoted by a RACK1 (RACK1)-dependent protein kinase C activity. In tissues responsive to insulin, controls fatty acid synthesis and glycolysis by exerting translational control of adipogenic transcription factors such as CEBPB, CEBPD and ATF4 that have G/C rich or uORF in their 5'UTR. Required for ROS-dependent megakaryocyte maturation and platelets formation, controls the expression of mitochondrial respiratory chain genes involved in reactive oxygen species (ROS) synthesis. Involved in miRNA-mediated gene silencing by the RNA-induced silencing complex (RISC). Required for both miRNA-mediated translational repression and miRNA-mediated cleavage of complementary mRNAs by RISC. Modulates cell cycle progression and global translation of pre-B cells, its activation seems to be rate-limiting in tumorigenesis and tumor growth. The protein is Eukaryotic translation initiation factor 6 of Bos taurus (Bovine).